Here is a 113-residue protein sequence, read N- to C-terminus: Molt-inhibiting hormone (113 aa).

A signal peptide spans 1 to 35; sequence MMSRTESRYSSQRTWLLSMVVLAALWSISVQRATA. 3 disulfide bridges follow: Cys-42–Cys-79, Cys-59–Cys-75, and Cys-62–Cys-88.

This sequence belongs to the arthropod CHH/MIH/GIH/VIH hormone family.

It localises to the secreted. Its function is as follows. Inhibits Y-organs where molting hormone (ecdysteroid) is secreted. A molting cycle is initiated when MIH secretion diminishes or stops. The chain is Molt-inhibiting hormone from Metacarcinus magister (Dungeness crab).